The sequence spans 360 residues: ELAV-like protein 2 (360 aa).

The tract at residues 1–36 (METQLSNGPTCNNTANGPTTVNNNCSSPVDSGNTED) is disordered. 2 consecutive RRM domains span residues 39–117 (TNLI…YARP) and 125–205 (ANLY…FANN). Phosphoserine is present on serine 221. Positions 277-355 (WCIFVYNLAP…RVLQVSFKTN (79 aa)) constitute an RRM 3 domain.

This sequence belongs to the RRM elav family. Interacts with IGF2BP1. Interacts with MAP1B light chain LC1. Brain; neural-specific. Expressed in the hippocampus.

Functionally, RNA-binding protein that binds to the 3' untranslated region (3'UTR) of target mRNAs. Seems to recognize a GAAA motif. Can bind to its own 3'UTR, the FOS 3'UTR and the ID 3'UTR. This chain is ELAV-like protein 2 (Elavl2), found in Mus musculus (Mouse).